The chain runs to 452 residues: UPF0210 protein Cthe_0410 (452 aa).

It belongs to the UPF0210 family. In terms of assembly, homodimer.

This Acetivibrio thermocellus (strain ATCC 27405 / DSM 1237 / JCM 9322 / NBRC 103400 / NCIMB 10682 / NRRL B-4536 / VPI 7372) (Clostridium thermocellum) protein is UPF0210 protein Cthe_0410.